A 186-amino-acid polypeptide reads, in one-letter code: tRNA (cytidine(56)-2'-O)-methyltransferase (186 aa).

Residues L84 and 110–114 (GAEKV) each bind S-adenosyl-L-methionine.

The protein belongs to the aTrm56 family. As to quaternary structure, homodimer.

It is found in the cytoplasm. It carries out the reaction cytidine(56) in tRNA + S-adenosyl-L-methionine = 2'-O-methylcytidine(56) in tRNA + S-adenosyl-L-homocysteine + H(+). In terms of biological role, specifically catalyzes the AdoMet-dependent 2'-O-ribose methylation of cytidine at position 56 in tRNAs. The polypeptide is tRNA (cytidine(56)-2'-O)-methyltransferase (Staphylothermus marinus (strain ATCC 43588 / DSM 3639 / JCM 9404 / F1)).